The primary structure comprises 303 residues: Glycine--tRNA ligase alpha subunit (303 aa).

The protein belongs to the class-II aminoacyl-tRNA synthetase family. In terms of assembly, tetramer of two alpha and two beta subunits.

The protein localises to the cytoplasm. It catalyses the reaction tRNA(Gly) + glycine + ATP = glycyl-tRNA(Gly) + AMP + diphosphate. In Salmonella paratyphi A (strain ATCC 9150 / SARB42), this protein is Glycine--tRNA ligase alpha subunit.